A 193-amino-acid chain; its full sequence is dCTP deaminase, dUMP-forming (193 aa).

Residues 101–106, Asp-119, 127–129, Gln-148, Tyr-162, and Gln-174 contribute to the dCTP site; these read KSSLGR and TLE. Residue Glu-129 is the Proton donor/acceptor of the active site. A disordered region spans residues 162–184; the sequence is YGSKGTGSHYQGQRGPTPSRSYE. Positions 167–183 are enriched in polar residues; the sequence is TGSHYQGQRGPTPSRSY.

The protein belongs to the dCTP deaminase family. Homotrimer.

The enzyme catalyses dCTP + 2 H2O = dUMP + NH4(+) + diphosphate. It functions in the pathway pyrimidine metabolism; dUMP biosynthesis; dUMP from dCTP: step 1/1. In terms of biological role, bifunctional enzyme that catalyzes both the deamination of dCTP to dUTP and the hydrolysis of dUTP to dUMP without releasing the toxic dUTP intermediate. This chain is dCTP deaminase, dUMP-forming, found in Bifidobacterium longum (strain DJO10A).